A 614-amino-acid chain; its full sequence is Dihydroxy-acid dehydratase (614 aa).

Residue D81 coordinates Mg(2+). C122 lines the [2Fe-2S] cluster pocket. Positions 123 and 124 each coordinate Mg(2+). At K124 the chain carries N6-carboxylysine. Residue C193 coordinates [2Fe-2S] cluster. E489 contacts Mg(2+). The active-site Proton acceptor is S515.

The protein belongs to the IlvD/Edd family. As to quaternary structure, homodimer. Requires [2Fe-2S] cluster as cofactor. The cofactor is Mg(2+).

It catalyses the reaction (2R)-2,3-dihydroxy-3-methylbutanoate = 3-methyl-2-oxobutanoate + H2O. The enzyme catalyses (2R,3R)-2,3-dihydroxy-3-methylpentanoate = (S)-3-methyl-2-oxopentanoate + H2O. It functions in the pathway amino-acid biosynthesis; L-isoleucine biosynthesis; L-isoleucine from 2-oxobutanoate: step 3/4. It participates in amino-acid biosynthesis; L-valine biosynthesis; L-valine from pyruvate: step 3/4. Functionally, functions in the biosynthesis of branched-chain amino acids. Catalyzes the dehydration of (2R,3R)-2,3-dihydroxy-3-methylpentanoate (2,3-dihydroxy-3-methylvalerate) into 2-oxo-3-methylpentanoate (2-oxo-3-methylvalerate) and of (2R)-2,3-dihydroxy-3-methylbutanoate (2,3-dihydroxyisovalerate) into 2-oxo-3-methylbutanoate (2-oxoisovalerate), the penultimate precursor to L-isoleucine and L-valine, respectively. The chain is Dihydroxy-acid dehydratase from Cellvibrio japonicus (strain Ueda107) (Pseudomonas fluorescens subsp. cellulosa).